The primary structure comprises 426 residues: 6-Hydroxy-7-prenyldeoxybrevianamide E synthase notC (426 aa).

E94 contacts substrate. Dimethylallyl diphosphate is bound by residues R105, K191, and Y193. Substrate is bound at residue Y195. Dimethylallyl diphosphate-binding residues include K267, Y269, Q352, Y354, Y418, and Y422.

It belongs to the tryptophan dimethylallyltransferase family.

It catalyses the reaction 6-hydroxydeoxybrevianamide E + dimethylallyl diphosphate = notoamide S + diphosphate. It functions in the pathway alkaloid biosynthesis. With respect to regulation, addition of 5 mM Mg(2+), Ca(2+) or Mn(2+) slightly enhances catalysis (about 100-120%). Significant reduction of enzyme activity (2%-35%) is observed with Cu(2+), Zn(2+), Fe(2+), or Sn(2+) (5 mM). In terms of biological role, prenyltransferase; part of the gene cluster that mediates the biosynthesis of notoamide, a fungal indole alkaloid that belongs to a family of natural products containing a characteristic bicyclo[2.2.2]diazaoctane core. The first step of notoamide biosynthesis involves coupling of L-proline and L-tryptophan by the bimodular NRPS notE, to produce cyclo-L-tryptophan-L-proline called brevianamide F. The reverse prenyltransferase notF then acts as a deoxybrevianamide E synthase and converts brevianamide F to deoxybrevianamide E via reverse prenylation at C-2 of the indole ring leading to the bicyclo[2.2.2]diazaoctane core. Deoxybrevianamide E is further hydroxylated at C-6 of the indole ring, likely catalyzed by the cytochrome P450 monooxygenase notG, to yield 6-hydroxy-deoxybrevianamide E. 6-hydroxy-deoxybrevianamide E is a specific substrate of the prenyltransferase notC for normal prenylation at C-7 to produce 6-hydroxy-7-prenyl-deoxybrevianamide, also called notoamide S. As the proposed pivotal branching point in notoamide biosynthesis, notoamide S can be diverted to notoamide E through an oxidative pyran ring closure putatively catalyzed by either notH cytochrome P450 monooxygenase or the notD FAD-linked oxidoreductase. This step would be followed by an indole 2,3-epoxidation-initiated pinacol-like rearrangement catalyzed by the notB FAD-dependent monooxygenase leading to the formation of notoamide C and notoamide D. On the other hand notoamide S is converted to notoamide T by notH (or notD), a bifunctional oxidase that also functions as the intramolecular Diels-Alderase responsible for generation of (+)-notoamide T. To generate antipodal (-)-notoaminide T, notH' (or notD') in Aspergillus versicolor is expected to catalyze a Diels-Alder reaction leading to the opposite stereochemistry. The remaining oxidoreductase notD (or notH) likely catalyzes the oxidative pyran ring formation to yield (+)-stephacidin A. The FAD-dependent monooxygenase notI is highly similar to notB and is predicted to catalyze a similar conversion from (+)-stephacidin A to (-)-notoamide B via the 2,3-epoxidation of (+)-stephacidin A followed by a pinacol-type rearrangement. Finally, it remains unclear which enzyme could be responsible for the final hydroxylation steps leading to notoamide A and sclerotiamide. This Aspergillus sp. (strain MF297-2) protein is 6-Hydroxy-7-prenyldeoxybrevianamide E synthase notC.